The primary structure comprises 189 residues: MNGRRKLNMQQNKRLITISMLSAIAFVLTFIKFPIPFLPPYLTLDFSDVPSLLATFTFGPVAGIIVALVKNLLNYLFSMGDPVGPFANFLAGASFLLTAYAIYKNKRSTKSLITGLIIATIVMTIVLSILNYFVLLPLYGMIFNLADIANNLKVIIVSGIIPFNIIKGIVISIVFILLYRRLANFLKRI.

Over 1-9 (MNGRRKLNM) the chain is Cytoplasmic. Residues 10-29 (QQNKRLITISMLSAIAFVLT) form a helical membrane-spanning segment. At 30–44 (FIKFPIPFLPPYLTL) the chain is on the periplasmic side. The segment at residues 45 to 56 (DFSDVPSLLATF) is an intramembrane region (helical). Residues 57-58 (TF) are Cytoplasmic-facing. The helical transmembrane segment at 59-78 (GPVAGIIVALVKNLLNYLFS) threads the bilayer. Topologically, residues 79–82 (MGDP) are periplasmic. Residues 83–104 (VGPFANFLAGASFLLTAYAIYK) traverse the membrane as a helical segment. The Cytoplasmic segment spans residues 105–107 (NKR). The helical transmembrane segment at 108–132 (STKSLITGLIIATIVMTIVLSILNY) threads the bilayer. The Periplasmic segment spans residues 133–159 (FVLLPLYGMIFNLADIANNLKVIIVSG). The chain crosses the membrane as a helical span at residues 160–182 (IIPFNIIKGIVISIVFILLYRRL). Residues 183–189 (ANFLKRI) lie on the Cytoplasmic side of the membrane.

This sequence belongs to the prokaryotic riboflavin transporter (P-RFT) (TC 2.A.87) family. As to quaternary structure, forms a stable energy-coupling factor (ECF) transporter complex composed of a membrane-embedded substrate-binding protein (S component), 2 ATP-binding proteins (A component) and 2 transmembrane proteins (T component). May be able to interact with more than 1 S component at a time.

It localises to the cell membrane. Its function is as follows. Mediates riboflavin uptake, may also transport FMN and roseoflavin. Probably a riboflavin-binding protein that interacts with the energy-coupling factor (ECF) ABC-transporter complex. Unlike classic ABC transporters this ECF transporter provides the energy necessary to transport a number of different substrates. The substrates themselves are bound by transmembrane, not extracytoplasmic soluble proteins. The protein is Riboflavin transporter RibU (ribU) of Staphylococcus aureus (strain TCH60).